Here is a 1407-residue protein sequence, read N- to C-terminus: DNA-directed RNA polymerase subunit beta' (1407 aa).

Residues cysteine 70, cysteine 72, cysteine 85, and cysteine 88 each contribute to the Zn(2+) site. 3 residues coordinate Mg(2+): aspartate 460, aspartate 462, and aspartate 464. Zn(2+) is bound by residues cysteine 814, cysteine 888, cysteine 895, and cysteine 898.

The protein belongs to the RNA polymerase beta' chain family. The RNAP catalytic core consists of 2 alpha, 1 beta, 1 beta' and 1 omega subunit. When a sigma factor is associated with the core the holoenzyme is formed, which can initiate transcription. Mg(2+) serves as cofactor. The cofactor is Zn(2+).

It carries out the reaction RNA(n) + a ribonucleoside 5'-triphosphate = RNA(n+1) + diphosphate. Functionally, DNA-dependent RNA polymerase catalyzes the transcription of DNA into RNA using the four ribonucleoside triphosphates as substrates. In Cellvibrio japonicus (strain Ueda107) (Pseudomonas fluorescens subsp. cellulosa), this protein is DNA-directed RNA polymerase subunit beta'.